Reading from the N-terminus, the 238-residue chain is uncharacterized protein (238 aa).

7 helical membrane passes run 19-39 (FIYG…LLGW), 64-84 (WSVI…IYNW), 85-105 (QVLY…YFTK), 112-132 (LWND…SYYF), 141-161 (ILWV…YVKS), 176-196 (VIFH…ILAL), and 218-238 (VGLI…VATL).

It to B.subtilis YwiC.

Its subcellular location is the cell membrane. This is an uncharacterized protein from Haemophilus influenzae (strain ATCC 51907 / DSM 11121 / KW20 / Rd).